Reading from the N-terminus, the 393-residue chain is Heparan sulfate glucosamine 3-O-sulfotransferase 3A1 (393 aa).

The Cytoplasmic portion of the chain corresponds to Met-1–Lys-24. The chain crosses the membrane as a helical; Signal-anchor for type II membrane protein span at residues Phe-25 to Ala-43. Topologically, residues Glu-44–Gly-393 are lumenal. The segment at Gln-85–Ala-121 is disordered. A 3'-phosphoadenylyl sulfate-binding site is contributed by Lys-149 to Arg-153. Substrate contacts are provided by residues Glu-171–Arg-177 and Lys-202–Ser-205. 3'-phosphoadenylyl sulfate contacts are provided by Arg-230 and Ser-238. Asn-260 is a glycosylation site (N-linked (GlcNAc...) asparagine). Substrate is bound at residue Trp-270–Ser-271. A glycan (N-linked (GlcNAc...) asparagine) is linked at Asn-331. The cysteines at positions 338 and 350 are disulfide-linked. Lys-355–His-359 provides a ligand contact to 3'-phosphoadenylyl sulfate.

It belongs to the sulfotransferase 1 family.

The protein localises to the golgi apparatus membrane. It catalyses the reaction alpha-D-glucosaminyl-[heparan sulfate](n) + 3'-phosphoadenylyl sulfate = 3-sulfo-alpha-D-glucosaminyl-[heparan sulfate](n) + adenosine 3',5'-bisphosphate + H(+). Sulfotransferase that utilizes 3'-phospho-5'-adenylyl sulfate (PAPS) to catalyze the transfer of a sulfo group to an N-unsubstituted glucosamine linked to a 2-O-sulfo iduronic acid unit on heparan sulfate. Catalyzes the O-sulfation of glucosamine in IdoUA2S-GlcNS and also in IdoUA2S-GlcNH2. Unlike HS3ST1/3-OST-1, does not convert non-anticoagulant heparan sulfate to anticoagulant heparan sulfate. The chain is Heparan sulfate glucosamine 3-O-sulfotransferase 3A1 (Hs3st3a1) from Mus musculus (Mouse).